The chain runs to 287 residues: Protease HtpX (287 aa).

2 helical membrane passes run 4–24 (IFLL…VMSI) and 33–53 (GGLL…SLAI). Zn(2+) is bound at residue His139. Residue Glu140 is part of the active site. His143 lines the Zn(2+) pocket. 2 consecutive transmembrane segments (helical) span residues 154–174 (LIQG…AGII) and 195–215 (AVVF…VAYF). Zn(2+) is bound at residue Glu220.

It belongs to the peptidase M48B family. It depends on Zn(2+) as a cofactor.

The protein resides in the cell inner membrane. This Shewanella putrefaciens (strain CN-32 / ATCC BAA-453) protein is Protease HtpX.